The sequence spans 437 residues: Probable eukaryotic translation initiation factor 5-2 (437 aa).

Position 29 to 36 (29 to 36 (GKGNGIKT)) interacts with GTP. Composition is skewed to basic and acidic residues over residues 148–179 (EQKK…EQRK) and 191–212 (KDSK…HDEN). Disordered stretches follow at residues 148-231 (EQKK…WQTD) and 262-284 (EKKA…PPQE). Ser201 carries the phosphoserine; by CK2 modification. A compositionally biased stretch (acidic residues) spans 213-226 (ALEVDEDEDDDDGV). Thr230 is subject to Phosphothreonine; by CK2. The W2 domain maps to 278–436 (ENPPPQEKNL…QSAESESEEE (159 aa)). Residues Ser428, Ser431, and Ser433 each carry the phosphoserine; by CK2 modification.

This sequence belongs to the eIF-2-beta/eIF-5 family. Phosphorylated at Ser-201, Thr-230, Ser-428, Ser-431, and Ser-433 by CK2.

Functionally, catalyzes the hydrolysis of GTP bound to the 40S ribosomal initiation complex (40S.mRNA.Met-tRNA[F].eIF-2.GTP) with the subsequent joining of a 60S ribosomal subunit resulting in the release of eIF-2 and the guanine nucleotide. The subsequent joining of a 60S ribosomal subunit results in the formation of a functional 80S initiation complex (80S.mRNA.Met-tRNA[F]). This Arabidopsis thaliana (Mouse-ear cress) protein is Probable eukaryotic translation initiation factor 5-2.